Consider the following 173-residue polypeptide: Ribosome maturation factor RimM (173 aa).

Positions 94–168 (SNESYLCDLL…LIRINPPKGL (75 aa)) constitute a PRC barrel domain.

This sequence belongs to the RimM family. In terms of assembly, binds ribosomal protein uS19.

Its subcellular location is the cytoplasm. Functionally, an accessory protein needed during the final step in the assembly of 30S ribosomal subunit, possibly for assembly of the head region. Essential for efficient processing of 16S rRNA. May be needed both before and after RbfA during the maturation of 16S rRNA. It has affinity for free ribosomal 30S subunits but not for 70S ribosomes. This is Ribosome maturation factor RimM from Lawsonia intracellularis (strain PHE/MN1-00).